A 137-amino-acid chain; its full sequence is Large-conductance mechanosensitive channel (137 aa).

3 consecutive transmembrane segments (helical) span residues 15-35, 38-58, and 80-100; these read IDLA…NSIV, IFMP…MFIQ, and GNFI…FLFV.

Belongs to the MscL family. As to quaternary structure, homopentamer.

The protein resides in the cell inner membrane. Channel that opens in response to stretch forces in the membrane lipid bilayer. May participate in the regulation of osmotic pressure changes within the cell. This is Large-conductance mechanosensitive channel from Bartonella henselae (strain ATCC 49882 / DSM 28221 / CCUG 30454 / Houston 1) (Rochalimaea henselae).